The following is a 517-amino-acid chain: ATP synthase subunit alpha (517 aa).

174 to 181 serves as a coordination point for ATP; sequence GDRQTGKT.

It belongs to the ATPase alpha/beta chains family. In terms of assembly, F-type ATPases have 2 components, CF(1) - the catalytic core - and CF(0) - the membrane proton channel. CF(1) has five subunits: alpha(3), beta(3), gamma(1), delta(1), epsilon(1). CF(0) has three main subunits: a(1), b(2) and c(9-12). The alpha and beta chains form an alternating ring which encloses part of the gamma chain. CF(1) is attached to CF(0) by a central stalk formed by the gamma and epsilon chains, while a peripheral stalk is formed by the delta and b chains.

The protein localises to the cell inner membrane. The catalysed reaction is ATP + H2O + 4 H(+)(in) = ADP + phosphate + 5 H(+)(out). In terms of biological role, produces ATP from ADP in the presence of a proton gradient across the membrane. The alpha chain is a regulatory subunit. In Delftia acidovorans (strain DSM 14801 / SPH-1), this protein is ATP synthase subunit alpha.